The primary structure comprises 501 residues: Histone deacetylase 19 (501 aa).

The interval 17 to 329 is histone deacetylase; it reads RKVCYFYDPE…WCYETGVALG (313 aa). Residue H149 is the Proton donor/acceptor of the active site. Residues D184, H186, and D272 each coordinate Zn(2+). The disordered stretch occupies residues 383–501; that stretch reads HAPSVPFQER…GAEQAFPPKT (119 aa). A compositionally biased stretch (acidic residues) spans 397–407; sequence ETPEVDEDQED. A Phosphoserine modification is found at S416. Composition is skewed to basic and acidic residues over residues 422 to 457 and 479 to 488; these read DDRK…KGCE and ASVKMEEEGT.

This sequence belongs to the histone deacetylase family. HD type 1 subfamily. Interacts with SIN3, SAP18 and TPR1. Interacts with CDKE-1, MED14 and LUG. Interacts with TPL. Interacts with AHL22. Zn(2+) serves as cofactor. In terms of tissue distribution, highly expressed in leaves, stems, flowers and young siliques.

The protein localises to the nucleus. It catalyses the reaction N(6)-acetyl-L-lysyl-[histone] + H2O = L-lysyl-[histone] + acetate. Functionally, responsible for the deacetylation of lysine residues on the N-terminal part of the core histones (H2A, H2B, H3 and H4). Histone deacetylation gives a tag for epigenetic repression and plays an important role in transcriptional regulation, cell cycle progression and developmental events. Histone deacetylases act via the formation of large multiprotein complexes. HDA19 is involved in jasmonic acid and ethylene signaling of pathogen response. Part of a repressor complex including APETALA2 (AP2) and TOPLESS (TPL) that control the expression domains of numerous floral organ identity genes. Involved in negative regulation of salinity stress response. Represses the expression of stress tolerance-related genes, genes coding for late embryogenesis abundant (LEA) proteins that prevent protein aggregation, and positive regulators of abscisic acid (ABA) signaling, such as ABI5 and NAC019. The chain is Histone deacetylase 19 from Arabidopsis thaliana (Mouse-ear cress).